Consider the following 232-residue polypeptide: Pseudaminic acid cytidylyltransferase (232 aa).

It belongs to the CMP-NeuNAc synthase family. Requires Mg(2+) as cofactor.

The catalysed reaction is pseudaminate + CTP = CMP-pseudaminate + diphosphate. Functionally, catalyzes the final step in the biosynthesis of pseudaminic acid, a sialic-acid-like sugar that is used to modify flagellin. Mediates the activation of pseudaminic acid with CMP by forming CMP-pseudaminic acid. The chain is Pseudaminic acid cytidylyltransferase (pseF) from Campylobacter jejuni subsp. jejuni serotype O:2 (strain ATCC 700819 / NCTC 11168).